The following is a 185-amino-acid chain: Elongation factor P (185 aa).

This sequence belongs to the elongation factor P family.

It is found in the cytoplasm. It participates in protein biosynthesis; polypeptide chain elongation. In terms of biological role, involved in peptide bond synthesis. Stimulates efficient translation and peptide-bond synthesis on native or reconstituted 70S ribosomes in vitro. Probably functions indirectly by altering the affinity of the ribosome for aminoacyl-tRNA, thus increasing their reactivity as acceptors for peptidyl transferase. This is Elongation factor P from Bordetella petrii (strain ATCC BAA-461 / DSM 12804 / CCUG 43448).